A 59-amino-acid chain; its full sequence is Sec-independent protein translocase protein TatA (59 aa).

A helical membrane pass occupies residues 1 to 21 (MFSNIGFPGLILILVAVLILF).

It belongs to the TatA/E family. In terms of assembly, forms a complex with TatC.

The protein localises to the cell membrane. In terms of biological role, part of the twin-arginine translocation (Tat) system that transports large folded proteins containing a characteristic twin-arginine motif in their signal peptide across membranes. TatA could form the protein-conducting channel of the Tat system. The chain is Sec-independent protein translocase protein TatA from Bacillus mycoides (strain KBAB4) (Bacillus weihenstephanensis).